A 969-amino-acid chain; its full sequence is GATOR2 complex protein Wdr59 (969 aa).

A disordered region spans residues 1 to 24 (MPPTETLRPGERGTAGGPGAGAPE). WD repeat units follow at residues 127–167 (GHTR…KPAL), 172–211 (VCMS…CPTH), 215–255 (AHLN…RAEK), 258–303 (TTMS…DPIC), and 307–351 (GHTD…LKLC). Thr373 bears the Phosphothreonine mark. The region spanning 435-538 (HEFSLLNTNM…RALVAAMKKK (104 aa)) is the RWD domain. Residues 891-911 (ECRKCAKPKRTPKCEPCKRPV) form a C4-type zinc finger. Positions 892, 895, 904, 907, 917, 928, 933, 936, 939, 950, 953, 955, and 957 each coordinate Zn(2+). An RING-type; atypical zinc finger spans residues 912-960 (LFCVLCRLPVKGAANACLACGHGGHIDHMMQWFEKHNVCATCGCKCLER).

It belongs to the WD repeat WDR59 family. As to quaternary structure, component of the GATOR complex consisting of mio, Nup44A/Seh1, Im11, Nplr3, Nplr2, Wdr24, Wdr59 and Sec13. Within the GATOR complex, probable component of the GATOR2 subcomplex which is likely composed of mio, Nup44A/Seh1, Wdr24, Wdr59 and Sec13. The GATOR2 complex associates with unmet in the absence of S-adenosyl-L-methionine; the mio-Wdr24-Nup44A subcomplex is essential and sufficient for this interaction while Wdr59 and Sec13 are dispensable. This association acts as a nutrient sensor to inhibit mTORC1 signaling in the absence of methionine.

The protein resides in the lysosome membrane. Functionally, a component of the GATOR complex, which functions as a regulator of the amino acid-sensing branch of the mTORC1 signaling pathway. The two GATOR subcomplexes, GATOR1 and GATOR2, regulate the mTORC1 pathway in order to mediate metabolic homeostasis, female gametogenesis and the response to amino acid limitation and complete starvation. GATOR2 activates the mTORC1 signaling pathway through the inhibition of the GATOR1 subcomplex, controlling the switch to cell proliferation and growth under nutrient replete conditions and during female oocyte development. Acts as an atypical component of the GATOR2 subcomplex, which can either promote or inhibit mTORC1 signaling, depending on tissues: inhibits mTORC1 activity by preventing the activity of GATOR2 in the ovary and the eye imaginal disk brain, while it promotes mTORC1 activity in the fat body. This Drosophila melanogaster (Fruit fly) protein is GATOR2 complex protein Wdr59.